The following is a 555-amino-acid chain: Formate--tetrahydrofolate ligase (555 aa).

T65–T72 is a binding site for ATP.

Belongs to the formate--tetrahydrofolate ligase family.

It carries out the reaction (6S)-5,6,7,8-tetrahydrofolate + formate + ATP = (6R)-10-formyltetrahydrofolate + ADP + phosphate. The protein operates within one-carbon metabolism; tetrahydrofolate interconversion. The sequence is that of Formate--tetrahydrofolate ligase from Syntrophomonas wolfei subsp. wolfei (strain DSM 2245B / Goettingen).